Here is a 354-residue protein sequence, read N- to C-terminus: Guanine nucleotide-binding protein G(t) subunit alpha-3 (354 aa).

Positions 1–27 (MGSGISSESKESAKRSKELEKKLQEDA) are disordered. The N-myristoyl glycine moiety is linked to residue Gly2. Over residues 8–27 (ESKESAKRSKELEKKLQEDA) the composition is skewed to basic and acidic residues. Positions 32 to 354 (RTVKLLLLGA…KENLKDCGLF (323 aa)) constitute a G-alpha domain. The interval 35–48 (KLLLLGAGESGKST) is G1 motif. Residues 40-47 (GAGESGKS), 175-181 (LHSRVKT), 200-204 (DVGGQ), 269-272 (NKKD), and Ala326 each bind GTP. Mg(2+) is bound by residues Ser47 and Thr181. The G2 motif stretch occupies residues 173 to 181 (DVLHSRVKT). Residues 196-205 (FRMFDVGGQR) are G3 motif. The G4 motif stretch occupies residues 265 to 272 (VLFLNKKD). The segment at 324–329 (TCATDT) is G5 motif.

This sequence belongs to the G-alpha family. G(i/o/t/z) subfamily. In terms of assembly, g proteins are composed of 3 units; alpha, beta and gamma, respectively GNAT3, GNB1 and GNG13 for Gustducin heterotrimer for bitter taste transduction. The alpha chain contains the guanine nucleotide binding site. Component of the TAS2R14-GNAT3 complex, consisting of TAS2R14, GNAT3, GNB1 and GNG2; within the complex interacts with TAS2R14; this complex plays a role in the perception of bitterness. Gustducin heterotrimer may also be composed of GNAT3, GNB3 and GNG13. In terms of processing, potential N-myristoylation may anchor alpha-subunit to the inner surface of plasma membrane. Expressed in taste buds (sensory organs of clustered epithelial cells) of the circumvallate, foliate and fungiform papillae of the tongue, as well as in nasoincisor, palatal and epiglottal taste buds at protein level. Expressed in enteroendocrine of the gut, in the lumenal pole of a subset of brush cells lining the stomach and the intestine at protein level. Detected in solitary cells throughout the respiratory track. Expressed also in spermatozoa.

The protein resides in the cytoplasm. Functionally, guanine nucleotide-binding protein (G protein) alpha subunit playing a prominent role in bitter and sweet taste transduction as well as in umami (monosodium glutamate, monopotassium glutamate, and inosine monophosphate) taste transduction. Transduction by this alpha subunit involves coupling of specific cell-surface receptors with a cGMP-phosphodiesterase; Activation of phosphodiesterase lowers intracellular levels of cAMP and cGMP which may open a cyclic nucleotide-suppressible cation channel leading to influx of calcium, ultimately leading to release of neurotransmitter. Indeed, denatonium and strychnine induce transient reduction in cAMP and cGMP in taste tissue, whereas this decrease is inhibited by GNAT3 antibody. Gustducin heterotrimer transduces response to bitter and sweet compounds via regulation of phosphodiesterase for alpha subunit, as well as via activation of phospholipase C for beta and gamma subunits, with ultimate increase inositol trisphosphate and increase of intracellular Calcium. GNAT3 can functionally couple to taste receptors to transmit intracellular signal: receptor heterodimer TAS1R2/TAS1R3 senses sweetness and TAS1R1/TAS1R3 transduces umami taste, whereas the T2R family GPCRs act as bitter sensors. Also functions as lumenal sugar sensors in the gut to control the expression of the Na+-glucose transporter SGLT1 in response to dietaty sugar, as well as the secretion of Glucagon-like peptide-1, GLP-1 and glucose-dependent insulinotropic polypeptide, GIP. Thus, may modulate the gut capacity to absorb sugars, with implications for the prevention and treatment of malabsorption syndromes and diet-related disorders including diabetes and obesity. This chain is Guanine nucleotide-binding protein G(t) subunit alpha-3 (Gnat3), found in Rattus norvegicus (Rat).